Here is a 550-residue protein sequence, read N- to C-terminus: CTP synthase (550 aa).

The amidoligase domain stretch occupies residues 1–267; it reads MKTKFIFITG…DQKIAIMLRL (267 aa). S14 lines the CTP pocket. S14 is a binding site for UTP. ATP-binding positions include 15-20 and D72; that span reads SLGKGL. Mg(2+)-binding residues include D72 and E141. CTP-binding positions include 148-150, 188-193, and K224; these read DIE and KTKPTQ. UTP contacts are provided by residues 188–193 and K224; that span reads KTKPTQ. The region spanning 292 to 545 is the Glutamine amidotransferase type-1 domain; the sequence is TIGIVGKYVD…IKAAKKEAMG (254 aa). G354 provides a ligand contact to L-glutamine. The active-site Nucleophile; for glutamine hydrolysis is C381. L-glutamine is bound by residues 382 to 385, E405, and R473; that span reads LGMQ. Catalysis depends on residues H518 and E520.

The protein belongs to the CTP synthase family. Homotetramer.

The enzyme catalyses UTP + L-glutamine + ATP + H2O = CTP + L-glutamate + ADP + phosphate + 2 H(+). It carries out the reaction L-glutamine + H2O = L-glutamate + NH4(+). It catalyses the reaction UTP + NH4(+) + ATP = CTP + ADP + phosphate + 2 H(+). The protein operates within pyrimidine metabolism; CTP biosynthesis via de novo pathway; CTP from UDP: step 2/2. Its activity is regulated as follows. Allosterically activated by GTP, when glutamine is the substrate; GTP has no effect on the reaction when ammonia is the substrate. The allosteric effector GTP functions by stabilizing the protein conformation that binds the tetrahedral intermediate(s) formed during glutamine hydrolysis. Inhibited by the product CTP, via allosteric rather than competitive inhibition. Functionally, catalyzes the ATP-dependent amination of UTP to CTP with either L-glutamine or ammonia as the source of nitrogen. Regulates intracellular CTP levels through interactions with the four ribonucleotide triphosphates. This Nitratidesulfovibrio vulgaris (strain DSM 19637 / Miyazaki F) (Desulfovibrio vulgaris) protein is CTP synthase.